Reading from the N-terminus, the 507-residue chain is Maturase K (507 aa).

It belongs to the intron maturase 2 family. MatK subfamily.

Its subcellular location is the plastid. The protein resides in the chloroplast. Functionally, usually encoded in the trnK tRNA gene intron. Probably assists in splicing its own and other chloroplast group II introns. The sequence is that of Maturase K from Craterostigma plantagineum (Blue gem).